A 39-amino-acid chain; its full sequence is GRKSDCFRKSGFCAFLKCPSLTLISGKCSRFYLCCKRIR.

3 disulfide bridges follow: cysteine 6–cysteine 28, cysteine 13–cysteine 34, and cysteine 18–cysteine 35.

Bactericidal activity; inhibits S.aureus and E.coli. The polypeptide is Antimicrobial peptide CHP1 (Gallus gallus (Chicken)).